The chain runs to 135 residues: Large ribosomal subunit protein uL16c (135 aa).

Belongs to the universal ribosomal protein uL16 family. Part of the 50S ribosomal subunit.

The protein resides in the plastid. It is found in the chloroplast. This Ceratophyllum demersum (Rigid hornwort) protein is Large ribosomal subunit protein uL16c.